The primary structure comprises 198 residues: uncharacterized protein (198 aa).

The disordered stretch occupies residues 1 to 23 (MYFGKTRQSDQSGRVPPNQNVTT). Over residues 9–23 (SDQSGRVPPNQNVTT) the composition is skewed to polar residues. Mo-molybdopterin-binding residues include cysteine 75, histidine 144, and arginine 149.

Mo-molybdopterin serves as cofactor.

This is an uncharacterized protein from Bacillus subtilis (strain 168).